The primary structure comprises 149 residues: Nucleoside diphosphate kinase (149 aa).

ATP is bound by residues Lys9, Phe57, Arg85, Thr91, Arg102, and Asn112. His115 serves as the catalytic Pros-phosphohistidine intermediate.

The protein belongs to the NDK family. In terms of assembly, homotetramer. Requires Mg(2+) as cofactor.

Its subcellular location is the cytoplasm. The enzyme catalyses a 2'-deoxyribonucleoside 5'-diphosphate + ATP = a 2'-deoxyribonucleoside 5'-triphosphate + ADP. The catalysed reaction is a ribonucleoside 5'-diphosphate + ATP = a ribonucleoside 5'-triphosphate + ADP. Major role in the synthesis of nucleoside triphosphates other than ATP. The ATP gamma phosphate is transferred to the NDP beta phosphate via a ping-pong mechanism, using a phosphorylated active-site intermediate. The protein is Nucleoside diphosphate kinase of Thermomicrobium roseum (strain ATCC 27502 / DSM 5159 / P-2).